The sequence spans 234 residues: Small ribosomal subunit protein uS2c (234 aa).

The protein belongs to the universal ribosomal protein uS2 family.

It localises to the plastid. Its subcellular location is the chloroplast. The protein is Small ribosomal subunit protein uS2c (rps2) of Pinus thunbergii (Japanese black pine).